The chain runs to 847 residues: Nitrite reductase (NADH) large subunit (847 aa).

Residue 44–79 (YDRVHLSSYFSHHTAEELSLVREGFYEKHGIKVLVG) participates in FAD binding. 193–225 (LRRKIESMGVRVHTSKNTLEIVQEGVEARKTMR) serves as a coordination point for NAD(+). Cys425, Cys427, Cys459, and Cys462 together coordinate [2Fe-2S] cluster. [4Fe-4S] cluster-binding residues include Cys641, Cys647, Cys681, and Cys685. Residue Cys685 participates in siroheme binding.

It belongs to the nitrite and sulfite reductase 4Fe-4S domain family. In terms of assembly, homodimer which associates with NirD. Requires siroheme as cofactor. [2Fe-2S] cluster is required as a cofactor. The cofactor is [4Fe-4S] cluster. It depends on FAD as a cofactor.

The catalysed reaction is NH4(+) + 3 NAD(+) + 2 H2O = nitrite + 3 NADH + 5 H(+). The protein operates within nitrogen metabolism; nitrate reduction (assimilation). This Escherichia coli (strain K12) protein is Nitrite reductase (NADH) large subunit (nirB).